The primary structure comprises 792 residues: Cis-abienol synthase, chloroplastic (792 aa).

The transit peptide at 1 to 37 (MVLGLRSKIIPLPDHKLGNIKLGSVTNAICHRPCRVR) directs the protein to the chloroplast. Residues aspartate 539, aspartate 543, asparagine 684, and glutamate 692 each coordinate Mg(2+). The DDXXD motif signature appears at 539–543 (DDFFD).

The protein belongs to the terpene synthase family. It depends on Mg(2+) as a cofactor. In terms of tissue distribution, expressed specifically in trichomes.

It localises to the plastid. Its subcellular location is the chloroplast. The enzyme catalyses 8-hydroxycopalyl diphosphate = cis-abienol + diphosphate. Its pathway is secondary metabolite biosynthesis; terpenoid biosynthesis. Its function is as follows. Involved in the biosynthesis of cis-abienol, a labdane diterpene that can be used as synthesis precursor of ambergris substitution fragance products. This Nicotiana tabacum (Common tobacco) protein is Cis-abienol synthase, chloroplastic.